The following is a 187-amino-acid chain: Inosine triphosphate pyrophosphatase (187 aa).

11-16 (TSNKNK) is a binding site for ITP. Glutamate 39 contacts Mg(2+). ITP contacts are provided by residues lysine 51, 67–68 (DT), lysine 84, 143–146 (FGWD), lysine 164, and 169–170 (HR).

It belongs to the HAM1 NTPase family. As to quaternary structure, homodimer. Mg(2+) serves as cofactor. The cofactor is Mn(2+).

The protein localises to the cytoplasm. It localises to the nucleus. The enzyme catalyses ITP + H2O = IMP + diphosphate + H(+). It carries out the reaction dITP + H2O = dIMP + diphosphate + H(+). It catalyses the reaction XTP + H2O = XMP + diphosphate + H(+). Functionally, pyrophosphatase that hydrolyzes non-canonical purine nucleotides such as inosine triphosphate (ITP), deoxyinosine triphosphate (dITP) or xanthosine 5'-triphosphate (XTP) to their respective monophosphate derivatives. The enzyme does not distinguish between the deoxy- and ribose forms. Probably excludes non-canonical purines from RNA and DNA precursor pools, thus preventing their incorporation into RNA and DNA and avoiding chromosomal lesions. In Aspergillus fumigatus (strain ATCC MYA-4609 / CBS 101355 / FGSC A1100 / Af293) (Neosartorya fumigata), this protein is Inosine triphosphate pyrophosphatase.